Consider the following 217-residue polypeptide: Ras-related protein RABA1f (217 aa).

20-27 (GDSGVGKS) is a GTP binding site. The Effector region signature appears at 42–50 (SKSTIGVEF). GTP-binding positions include 68 to 72 (DTAGQ), 126 to 129 (NKAD), and 156 to 157 (SA). 2 S-geranylgeranyl cysteine lipidation sites follow: Cys214 and Cys215.

The protein belongs to the small GTPase superfamily. Rab family.

The protein resides in the cell membrane. Intracellular vesicle trafficking and protein transport. This Arabidopsis thaliana (Mouse-ear cress) protein is Ras-related protein RABA1f (RABA1F).